The chain runs to 240 residues: Transcriptional regulatory protein ResD (240 aa).

One can recognise a Response regulatory domain in the interval 8-121 (KILVVDDEAR…EVVLRVKALL (114 aa)). Asp57 bears the 4-aspartylphosphate mark. The ompR/PhoB-type DNA-binding region spans 137-237 (KNVLVFSHLS…VWGVGYKFEV (101 aa)).

Interacts with the RNA polymerase core. Post-translationally, phosphorylated by ResE.

It localises to the cytoplasm. Member of the two-component regulatory system ResD/ResE. Required for the expression of resA, ctaA, qcrABC and fnr; activation role in global regulation of aerobic and anaerobic respiration. This chain is Transcriptional regulatory protein ResD (resD), found in Bacillus subtilis (strain 168).